The sequence spans 528 residues: GMP synthase [glutamine-hydrolyzing] (528 aa).

The Glutamine amidotransferase type-1 domain occupies 13–204 (AIVILDFGSQ…VYHICGCEPD (192 aa)). Cys90 serves as the catalytic Nucleophile. Residues His178 and Glu180 contribute to the active site. The region spanning 205–403 (WTTSAFIDEA…LGLPEEIVRR (199 aa)) is the GMPS ATP-PPase domain. An ATP-binding site is contributed by 232–238 (SGGVDSS).

As to quaternary structure, homodimer.

It carries out the reaction XMP + L-glutamine + ATP + H2O = GMP + L-glutamate + AMP + diphosphate + 2 H(+). It participates in purine metabolism; GMP biosynthesis; GMP from XMP (L-Gln route): step 1/1. Catalyzes the synthesis of GMP from XMP. The protein is GMP synthase [glutamine-hydrolyzing] of Parasynechococcus marenigrum (strain WH8102).